Reading from the N-terminus, the 591-residue chain is ATPase family AAA domain-containing protein 3A (591 aa).

The disordered stretch occupies residues Met1 to Thr52. At Ser2 the chain carries N-acetylserine. The interval Ser2–Phe49 is required for interaction with the inner surface of the mitochondrial outer membrane. Residues Ser2–Lys245 are Mitochondrial intermembrane-facing. Positions Gly31–Ser47 are enriched in basic and acidic residues. Positions Glu55–Glu216 form a coiled coil. Residues Val246 to Ala263 form a helical membrane-spanning segment. Residues Lys264–Cys591 are Mitochondrial matrix-facing. The segment at Arg289 to Arg304 is S100B-binding. Gly351 to Thr358 provides a ligand contact to ATP. Lys490 carries the N6-acetyllysine; alternate modification. An N6-succinyllysine; alternate modification is found at Lys490. 2 positions are modified to N6-acetyllysine: Lys494 and Lys512.

Belongs to the AAA ATPase family. As to quaternary structure, can form homooligomers. Homodimer formation at the N-terminus may be regulated by ATP and is required for the interaction with the inner surface of the mitochondrial outer membrane and correct mitochondrial homeostasis. Interacts with components of the mitochondrial ribosome and with other proteins involved in mitochondrial RNA metabolism. May also interact with protein involved in lipid metabolism, including STARD9. May interact with FAM210A. Interacts with GADD45GIP1. Interacts with S100B in a Ca(+2)- and Zn(+2)-dependent manner; this interaction probably occurs in the cytosol prior to mitochondrial targeting. S100B could assist ATAD3A cytoplasmic processing, preventing aggregation and favoring mitochondrial localization. Interacts with HSP60/HSPD1. Interacts with CLPB. Interacts with EIF2AK3/PERK; ATAD3A and EIF2S1/eIF-2-alpha occupy a common binding site within the cytoplasmic loop of EIF2AK3/PERK, leading to prevent EIF2AK3/PERK association with its substrate EIF2S1/eIF-2-alpha.

The protein resides in the mitochondrion inner membrane. It localises to the mitochondrion matrix. The protein localises to the mitochondrion nucleoid. It catalyses the reaction ATP + H2O = ADP + phosphate + H(+). Functionally, essential for mitochondrial network organization, mitochondrial metabolism and cell growth at organism and cellular level. May play an important role in mitochondrial protein synthesis. May also participate in mitochondrial DNA replication. May bind to mitochondrial DNA D-loops and contribute to nucleoid stability. Required for enhanced channeling of cholesterol for hormone-dependent steroidogenesis. Involved in mitochondrial-mediated antiviral innate immunity. Required to protect mitochondria from the PERK-mediated unfolded protein response: specifically inhibits the activity of EIF2AK3/PERK at mitochondria-endoplasmic reticulum contact sites, thereby providing a safe haven for mitochondrial protein translation during endoplasmic reticulum stress. Ability to inhibit EIF2AK3/PERK is independent of its ATPase activity. Also involved in the mitochondrial DNA damage response by promoting signaling between damaged genomes and the mitochondrial membrane, leading to activation of the integrated stress response (ISR). The polypeptide is ATPase family AAA domain-containing protein 3A (Atad3a) (Rattus norvegicus (Rat)).